The primary structure comprises 402 residues: Phosphoglycerate kinase (402 aa).

Residues 24–26 (DLN), Arg39, 62–65 (HLGR), Arg121, and Arg161 contribute to the substrate site. ATP-binding positions include Lys211, Gly299, Glu330, and 359–362 (GGDS).

It belongs to the phosphoglycerate kinase family. In terms of assembly, monomer.

The protein localises to the cytoplasm. The enzyme catalyses (2R)-3-phosphoglycerate + ATP = (2R)-3-phospho-glyceroyl phosphate + ADP. The protein operates within carbohydrate degradation; glycolysis; pyruvate from D-glyceraldehyde 3-phosphate: step 2/5. The sequence is that of Phosphoglycerate kinase from Corynebacterium urealyticum (strain ATCC 43042 / DSM 7109).